Consider the following 478-residue polypeptide: Cytochrome P450 monooxygenase ATR3 (478 aa).

Residues A20–L42 traverse the membrane as a helical segment. N-linked (GlcNAc...) asparagine glycosylation is found at N159 and N268.

Belongs to the cytochrome P450 family. It depends on heme as a cofactor.

The protein localises to the membrane. It functions in the pathway mycotoxin biosynthesis. In terms of biological role, cytochrome P450 monooxygenase; part of the core atranone cluster (CAC) which products are predicted to catalyze most or all steps of mycotoxin atranone synthesis, starting from geranylgeranyl pyrophosphate (GGPP). The initial cyclization of GGPP to dolabellane is probably performed by the terpene cyclase ATR13. The Baeyer-Villiger oxidation near the end of the atranone synthesis, which converts atranones D and E to atranones F and G is predicted to be catalyzed by the monooxygenase ATR8. Of the CAC's other predicted gene products, the reducing PKS ATR6 might synthesize a polyketide chain. This polyketide is probably transferred onto the atranone backbone by the polyketide transferase ATR5. Other predicted CAC products include 4 oxygenases (ATR2, ATR3, ATR4, and ATR14), 3 short-chain reductases (ATR7, ATR9, and ATR10), and a methyltransferase (ATR12). These may all be involved in the various steps of atranone biosynthesis, although their specific roles must await experimental determination. The sequence is that of Cytochrome P450 monooxygenase ATR3 from Stachybotrys chlorohalonatus (strain IBT 40285).